Reading from the N-terminus, the 391-residue chain is Glycerophosphocholine acyltransferase 1 (391 aa).

Residues 1–66 (MSNNEDPINE…IAKQAEEHES (66 aa)) are Cytoplasmic-facing. Residues 67–87 (FINKVTHLLGVLGFGGFCFLL) traverse the membrane as a helical segment. Over 88 to 92 (GARPQ) the chain is Lumenal. A helical membrane pass occupies residues 93–113 (DIPYVYCLFFFIFVPLRWIYY). The Cytoplasmic segment spans residues 114–119 (RFKKWH). A helical membrane pass occupies residues 120-140 (YFLLDFCYYANTIFLVDLLLY). Over 141–144 (PKDE) the chain is Lumenal. The helical transmembrane segment at 145–165 (KLFMVCFSFAEGPLAWALIVW) threads the bilayer. Over 166–172 (RCSLVFS) the chain is Cytoplasmic. A helical membrane pass occupies residues 173 to 193 (SVDKIVSVLIHLLPGLVFFTI). At 194 to 226 (RWWNPATFEAMHPEGTSGRASWPYVEDKSFLFT) the chain is on the lumenal side. Residues 227–247 (WLFLVPLVAYFLWQLLYFLIV) traverse the membrane as a helical segment. At 248–294 (NVLRRQRLLRDPEVMTSYRELSKKAQKANNVWWRLSGLLGDQNRMLM) the chain is on the cytoplasmic side. Residues 295–315 (YILLQALFTVATTALTVPIFL) form a helical membrane-spanning segment. Residues 316-318 (SYE) are Lumenal-facing. Residues 319 to 339 (LHAVFQILKVSAAVWNGGSFL) form a helical membrane-spanning segment. Topologically, residues 340 to 391 (LDVMPRQVILKEKKKSELQPAHIQQYHSEPKQDQSPNSMEIRMKTIHSAEEQ) are cytoplasmic. Residues 354-391 (KSELQPAHIQQYHSEPKQDQSPNSMEIRMKTIHSAEEQ) are disordered. Residues 380-391 (IRMKTIHSAEEQ) show a composition bias toward basic and acidic residues.

Belongs to the GPC1 family.

The protein resides in the membrane. The enzyme catalyses sn-glycerol 3-phosphocholine + an acyl-CoA = a monoacyl-sn-glycero-3-phosphocholine + CoA. The catalysed reaction is sn-glycero-3-phosphoethanolamine + an acyl-CoA = a monoacyl-sn-glycero-3-phosphoethanolamine + CoA. It carries out the reaction sn-glycerol 3-phosphocholine + hexadecanoyl-CoA = hexadecanoyl-sn-glycero-3-phosphocholine + CoA. It catalyses the reaction (9Z)-hexadecenoyl-CoA + sn-glycerol 3-phosphocholine = (9Z-hexadecenoyl)-sn-glycero-3-phosphocholine + CoA. The enzyme catalyses (9Z,12Z)-octadecadienoyl-CoA + sn-glycerol 3-phosphocholine = (9Z,12Z-octadecadienoyl)-sn-glycero-3-phosphocholine + CoA. The catalysed reaction is (12R)-hydroxy-(9Z)-octadecenoyl-CoA + sn-glycerol 3-phosphocholine = (12R-hydroxy-9Z-octadecenoyl)-sn-glycero-3-phosphocholine + CoA. It carries out the reaction (9Z,12Z,15Z)-octadecatrienoyl-CoA + sn-glycerol 3-phosphocholine = (9Z,12Z,15Z-octadecatrienoyl)-sn-glycero-3-phosphocholine + CoA. It catalyses the reaction sn-glycerol 3-phosphocholine + (9Z)-octadecenoyl-CoA = (9Z-octadecenoyl)-sn-glycero-3-phosphocholine + CoA. Its function is as follows. Glycerophosphocholine acyltransferase (GPCAT) that utilizes acyl-CoA to acylate glycero-3-phosphocholine (GPC), forming lysophosphatidylcholine (LPC). Shows broad acyl specificities with a preference for 16:0-CoA, polyunsaturated acyl-CoA, and the hydroxylated ricinoleoyl-CoA. Also catalyzes the acylation of glycero-3-phosphoethanolamine (GPE) with acyl-CoA. In addition to acyl-CoA, GPCAT efficiently utilizes LPC and lysophosphatidylethanolamine (LPE) as acyl donors in the acylation of GPC. Contributes to the maintenance of phosphatidylcholine (PC) homeostasis and might also have specific functions in acyl editing of PC, such as transferring acyl groups modified at the sn-2 position of PC to the sn-1. The sequence is that of Glycerophosphocholine acyltransferase 1 from Ricinus communis (Castor bean).